Consider the following 151-residue polypeptide: Cardio acceleratory peptide 2b (151 aa).

An N-terminal signal peptide occupies residues 1–21 (MKSMLVHIVLVIFIIAEFSTA). Positions 22–28 (ETDHDKN) are excised as a propeptide. Val-42 is modified (valine amide). Positions 45 to 80 (SDPSLANSLRDGLEAGVLDGIYGDASQEDYNEADFQ) are excised as a propeptide. At Val-92 the chain carries Valine amide. A propeptide spanning residues 95–113 (GDAELRKWAHLLALQQVLD) is cleaved from the precursor. Leu-130 bears the Leucine amide mark. The propeptide occupies 134-151 (SVDAKSFADISKGQKELN).

It belongs to the pyrokinin family. As to expression, in larvae, the precursor peptide is exclusively present in a single pair of neuroendocrine cells in the labial neuromere (subesophageal ganglion) and three pairs of cells in the ventral ganglion abdominal neuromeres.

The protein localises to the secreted. Its function is as follows. CAP-1 and CAP-2, but not CAP-3 are ligands for the Capa receptor. CAP-1 and CAP-2 are probably components of the signal transduction pathway that leads to Malpighian tubule fluid secretion via the second messenger nitric oxide. CAP-3 is a ligand for the PK1-R G-protein coupled receptor. This is Cardio acceleratory peptide 2b (Capa) from Drosophila melanogaster (Fruit fly).